We begin with the raw amino-acid sequence, 369 residues long: Putative F-box protein At1g70960 (369 aa).

The F-box domain maps to 3–54 (NTSFETLPRHMQMEILSRVPLKFLMKFMCVSKKWASIIRGEEFREDYLFQSM).

In Arabidopsis thaliana (Mouse-ear cress), this protein is Putative F-box protein At1g70960.